Consider the following 764-residue polypeptide: Protein Lines homolog 1 (764 aa).

Disordered regions lie at residues 615-668 (SQSQ…TSLC) and 682-702 (WEEQ…SSPF). Residues 645-654 (DSSEASEEET) are compositionally biased toward acidic residues. Residue serine 650 is modified to Phosphoserine. Residues 658-668 (HLANSKQTSLC) show a composition bias toward polar residues. Residues 691 to 702 (EPLLSAESSSPF) are compositionally biased toward low complexity.

This sequence belongs to the protein lines family.

The protein is Protein Lines homolog 1 of Mus musculus (Mouse).